A 325-amino-acid polypeptide reads, in one-letter code: Methionyl-tRNA formyltransferase (325 aa).

Residue 112 to 115 (SLLP) coordinates (6S)-5,6,7,8-tetrahydrofolate.

It belongs to the Fmt family.

It carries out the reaction L-methionyl-tRNA(fMet) + (6R)-10-formyltetrahydrofolate = N-formyl-L-methionyl-tRNA(fMet) + (6S)-5,6,7,8-tetrahydrofolate + H(+). Functionally, attaches a formyl group to the free amino group of methionyl-tRNA(fMet). The formyl group appears to play a dual role in the initiator identity of N-formylmethionyl-tRNA by promoting its recognition by IF2 and preventing the misappropriation of this tRNA by the elongation apparatus. This Roseiflexus sp. (strain RS-1) protein is Methionyl-tRNA formyltransferase.